We begin with the raw amino-acid sequence, 651 residues long: Probable endo-1,3(4)-beta-glucanase NFIA_089530 (651 aa).

The signal sequence occupies residues methionine 1–alanine 21. A GH16 domain is found at glutamate 36–threonine 289. Asparagine 64 carries N-linked (GlcNAc...) asparagine glycosylation. Glutamate 145 functions as the Nucleophile in the catalytic mechanism. The active-site Proton donor is glutamate 150. Asparagine 200 is a glycosylation site (N-linked (GlcNAc...) asparagine). Low complexity predominate over residues proline 364–threonine 378. Disordered stretches follow at residues proline 364–serine 422 and serine 508–alanine 557. Composition is skewed to polar residues over residues asparagine 379–proline 400 and glutamine 520–glycine 535. A compositionally biased stretch (low complexity) spans serine 542 to alanine 557. The GPI-anchor amidated asparagine moiety is linked to residue asparagine 629. The propeptide at glycine 630 to alanine 651 is removed in mature form.

Belongs to the glycosyl hydrolase 16 family.

It is found in the cell membrane. It catalyses the reaction Endohydrolysis of (1-&gt;3)- or (1-&gt;4)-linkages in beta-D-glucans when the glucose residue whose reducing group is involved in the linkage to be hydrolyzed is itself substituted at C-3.. Functionally, mixed-linked glucanase involved in the degradation of complex natural cellulosic substrates. The protein is Probable endo-1,3(4)-beta-glucanase NFIA_089530 of Neosartorya fischeri (strain ATCC 1020 / DSM 3700 / CBS 544.65 / FGSC A1164 / JCM 1740 / NRRL 181 / WB 181) (Aspergillus fischerianus).